Consider the following 461-residue polypeptide: Ornithine decarboxylase (461 aa).

K69 is modified (N6-(pyridoxal phosphate)lysine). Pyridoxal 5'-phosphate is bound by residues S200, G237, and 274–277 (EPGR). Position 303 is a phosphoserine; by CK2 (S303). 331–332 (YD) serves as a coordination point for substrate. Residue C360 is the Proton donor; shared with dimeric partner of the active site. C360 carries the S-nitrosocysteine modification. D361 is a binding site for substrate. Position 389 (Y389) interacts with pyridoxal 5'-phosphate.

It belongs to the Orn/Lys/Arg decarboxylase class-II family. Homodimer. Only the dimer is catalytically active, as the active sites are constructed of residues from both monomers. It depends on pyridoxal 5'-phosphate as a cofactor.

The enzyme catalyses L-ornithine + H(+) = putrescine + CO2. It functions in the pathway amine and polyamine biosynthesis; putrescine biosynthesis via L-ornithine pathway; putrescine from L-ornithine: step 1/1. With respect to regulation, inhibited by antizymes (AZs) OAZ1, OAZ2 and OAZ3 in response to polyamine levels. AZs inhibit the assembly of the functional homodimer by binding to ODC monomers. Additionally, OAZ1 targets ODC monomers for ubiquitin-independent proteolytic destruction by the 26S proteasome. Its function is as follows. Catalyzes the first and rate-limiting step of polyamine biosynthesis that converts ornithine into putrescine, which is the precursor for the polyamines, spermidine and spermine. Polyamines are essential for cell proliferation and are implicated in cellular processes, ranging from DNA replication to apoptosis. This is Ornithine decarboxylase (Odc1) from Mus pahari (Gairdner's shrew-mouse).